The primary structure comprises 274 residues: NH(3)-dependent NAD(+) synthetase (274 aa).

ATP is bound at residue 46-53 (GISGGQDS). Aspartate 52 is a Mg(2+) binding site. Residue arginine 140 coordinates deamido-NAD(+). Threonine 160 is an ATP binding site. Residue glutamate 165 participates in Mg(2+) binding. 2 residues coordinate deamido-NAD(+): lysine 173 and aspartate 180. ATP contacts are provided by lysine 189 and threonine 211. 260–261 (HK) is a deamido-NAD(+) binding site.

Belongs to the NAD synthetase family. In terms of assembly, homodimer.

The catalysed reaction is deamido-NAD(+) + NH4(+) + ATP = AMP + diphosphate + NAD(+) + H(+). It functions in the pathway cofactor biosynthesis; NAD(+) biosynthesis; NAD(+) from deamido-NAD(+) (ammonia route): step 1/1. In terms of biological role, catalyzes the ATP-dependent amidation of deamido-NAD to form NAD. Uses ammonia as a nitrogen source. The protein is NH(3)-dependent NAD(+) synthetase of Streptococcus pneumoniae (strain 70585).